The chain runs to 431 residues: Pyroglutamylated RF-amide peptide receptor (431 aa).

At 1–46 (MQALNITPEQFSRLLRDHNLTREQFIALYRLRPLVYTPELPGRAKL) the chain is on the extracellular side. A glycan (N-linked (GlcNAc...) asparagine) is linked at asparagine 19. Residues 47 to 67 (ALVLTGVLIFALALFGNALVF) form a helical membrane-spanning segment. Residues 68-81 (YVVTRSKAMRTVTN) lie on the Cytoplasmic side of the membrane. The helical transmembrane segment at 82 to 102 (IFICSLALSDLLITFFCIPVT) threads the bilayer. Residues 103–120 (MLQNISDNWLGGAFICKM) lie on the Extracellular side of the membrane. The chain crosses the membrane as a helical span at residues 121 to 141 (VPFVQSTAVVTEILTMTCIAV). Topologically, residues 142 to 162 (ERHQGLVHPFKMKWQYTNRRA) are cytoplasmic. The chain crosses the membrane as a helical span at residues 163–183 (FTMLGVVWLVAVIVGSPMWHV). Residues 184–212 (QQLEIKYDFLYEKEHICCLEEWTSPVHQK) lie on the Extracellular side of the membrane. A helical membrane pass occupies residues 213–233 (IYTTFILVILFLLPLMVMLIL). The Cytoplasmic segment spans residues 234–271 (YSKIGYELWIKKRVGDGSVLRTIHGKEMSKIARKKKRA). Residues 272–292 (VIMMVTVVALFAVCWAPFHVV) form a helical membrane-spanning segment. At 293–311 (HMMIEYSNFEKEYDDVTIK) the chain is on the extracellular side. A helical membrane pass occupies residues 312-332 (MIFAIVQIIGFSNSICNPIVY). The Cytoplasmic segment spans residues 333–431 (AFMNENFKKN…AENSPLDSGH (99 aa)).

Belongs to the G-protein coupled receptor 1 family. As to expression, expressed widely in the brain with high levels in the hypothalamus, trigeminal ganglia and vestibular neurons, and moderate levels in the amygdala, cortex, pituitary, hippocampus, thalamus, caudate nucleus and medulla oblongata. In peripheral tissues, expressed at high levels in the retina and at moderate levels in the heart, kidney, testis and thyroid.

Its subcellular location is the cell membrane. Receptor for the orexigenic neuropeptide QRFP. The activity of this receptor is mediated by G proteins that modulate adenylate cyclase activity and intracellular calcium levels. This Homo sapiens (Human) protein is Pyroglutamylated RF-amide peptide receptor (QRFPR).